The sequence spans 252 residues: 14-3-3 protein 7 (252 aa).

The protein belongs to the 14-3-3 family. As to quaternary structure, homodimer.

The sequence is that of 14-3-3 protein 7 (TFT7) from Solanum lycopersicum (Tomato).